The following is a 263-amino-acid chain: Ribonuclease 3 (263 aa).

The tract at residues 1–23 is disordered; it reads MPHSKNQRKHRHHSHSERRRQPK. Residues 35–164 form the RNase III domain; it reads FDELLRTLNL…FVGALYLDQG (130 aa). Mg(2+) is bound at residue Glu77. Residue Asp81 is part of the active site. 2 residues coordinate Mg(2+): Asp150 and Glu153. Glu153 is a catalytic residue. One can recognise a DRBM domain in the interval 190-259; that stretch reads DFKSQLQEFI…AQQALITLSQ (70 aa).

The protein belongs to the ribonuclease III family. Homodimer. Requires Mg(2+) as cofactor.

Its subcellular location is the cytoplasm. The catalysed reaction is Endonucleolytic cleavage to 5'-phosphomonoester.. In terms of biological role, digests double-stranded RNA. Involved in the processing of primary rRNA transcript to yield the immediate precursors to the large and small rRNAs (23S and 16S). Processes some mRNAs, and tRNAs when they are encoded in the rRNA operon. Processes pre-crRNA and tracrRNA of type II CRISPR loci if present in the organism. In Halalkalibacterium halodurans (strain ATCC BAA-125 / DSM 18197 / FERM 7344 / JCM 9153 / C-125) (Bacillus halodurans), this protein is Ribonuclease 3.